A 309-amino-acid polypeptide reads, in one-letter code: Methionyl-tRNA formyltransferase (309 aa).

109-112 (SLLP) is a (6S)-5,6,7,8-tetrahydrofolate binding site.

Belongs to the Fmt family.

It carries out the reaction L-methionyl-tRNA(fMet) + (6R)-10-formyltetrahydrofolate = N-formyl-L-methionyl-tRNA(fMet) + (6S)-5,6,7,8-tetrahydrofolate + H(+). In terms of biological role, attaches a formyl group to the free amino group of methionyl-tRNA(fMet). The formyl group appears to play a dual role in the initiator identity of N-formylmethionyl-tRNA by promoting its recognition by IF2 and preventing the misappropriation of this tRNA by the elongation apparatus. The protein is Methionyl-tRNA formyltransferase of Thiobacillus denitrificans (strain ATCC 25259 / T1).